Reading from the N-terminus, the 219-residue chain is Thymidylate kinase (219 aa).

7-14 is an ATP binding site; sequence GIDGAGKS.

The protein belongs to the thymidylate kinase family.

It carries out the reaction dTMP + ATP = dTDP + ADP. Its function is as follows. Phosphorylation of dTMP to form dTDP in both de novo and salvage pathways of dTTP synthesis. The sequence is that of Thymidylate kinase from Chlorobium limicola (strain DSM 245 / NBRC 103803 / 6330).